The chain runs to 160 residues: Interleukin-36 alpha (160 aa).

Positions 1–7 (MNKEKEL) are excised as a propeptide. 3'-nitrotyrosine is present on Tyr-98.

The protein belongs to the IL-1 family. As to quaternary structure, interacts with TMED10; the interaction mediates the translocation from the cytoplasm into the ERGIC (endoplasmic reticulum-Golgi intermediate compartment) and thereby secretion. In terms of processing, N-terminal truncation leads to a dramatic enhancement of its activity (&gt;1000-fold). As to expression, highly expressed in embryonic tissue and in tissues containing epithelial cells. Elevated expression levels are detected in chronic kidney disease; expressed inepithelia from the distal convoluted tubules (DCTs) to the cortical collecting ducts (CCDs) in single nephrons (at protein level).

The protein localises to the cytoplasm. Its subcellular location is the secreted. Cytokine that binds to and signals through the IL1RL2/IL-36R receptor which in turn activates NF-kappa-B and MAPK signaling pathways in target cells linked to a pro-inflammatory response. Part of the IL-36 signaling system that is thought to be present in epithelial barriers and to take part in local inflammatory response; similar to the IL-1 system with which it shares the coreceptor IL1RAP. Seems to be involved in skin inflammatory response by acting on keratinocytes, dendritic cells and indirectly on T-cells to drive tissue infiltration, cell maturation and cell proliferation. Induces the production of pro-inflammatory cytokines, including IL-12, Il-1 beta, IL-6, TNF-alpha and IL-23 in bone marrow-derived dendritic cells (BMDCs). Involved in dendritic cell maturation by stimulating the surface expression of CD80, CD86 and MHC class II. Induces the production of IFN-gamma, IL-4 and IL-17 by cultured CD4(+) T-cells and splenocytes. May play a role in pro-inflammatory effects in the lung: induces the expression of CXCL1 and CXCL2 in the lung, and the expression of TNF-alpha, IL-36c, IL-1A, IL-1B, CXCL1 and CXCL2 in isolated splenic CD11c(+) alveolar macrophages. May be involved in T-cell maturation by stimulating the surface expression of CD40 and modestly CD80 and CD86 in splenic CD11c(+) cells. May be involved in CD4(+) T-cell proliferation. Induces NF-kappa B activation in macrophages. The sequence is that of Interleukin-36 alpha from Mus musculus (Mouse).